An 872-amino-acid polypeptide reads, in one-letter code: Protein SEY1 (872 aa).

Residues 1-749 (MVANGHFAGV…KRSAIGGITQ (749 aa)) are Cytoplasmic-facing. The GB1/RHD3-type G domain maps to 49–294 (GFNYHLISVF…IEGGIFLPEY (246 aa)). 59-66 (GSQSTGKS) provides a ligand contact to GTP. Residues 482–504 (SNYQQELSLYQKDLENIGGQLRR) are a coiled coil. The tract at residues 676 to 704 (LDKWIGHTPSSATPADEEDLTPIGGVDED) is disordered. Acidic residues predominate over residues 690–704 (ADEEDLTPIGGVDED). Residues 750–770 (VPLYFYGLLLALGWNEIVAVL) traverse the membrane as a helical segment. The Lumenal segment spans residues 771–773 (RNP). A helical transmembrane segment spans residues 774–794 (AYFLLLFVCAVTAYVTYQLNL). The Cytoplasmic segment spans residues 795–872 (WGPIIKMTEA…IDDADDDDDF (78 aa)). Residues 849–872 (NRKSAGGFQNNRSHIDDADDDDDF) are disordered.

This sequence belongs to the TRAFAC class dynamin-like GTPase superfamily. GB1/RHD3 GTPase family. RHD3 subfamily.

The protein resides in the endoplasmic reticulum membrane. Its function is as follows. Cooperates with the reticulon proteins and tubule-shaping DP1 family proteins to generate and maintain the structure of the tubular endoplasmic reticulum network. Has GTPase activity, which is required for its function in ER organization. The protein is Protein SEY1 of Paracoccidioides brasiliensis (strain Pb03).